We begin with the raw amino-acid sequence, 479 residues long: Cyclin-dependent kinase F-1 (479 aa).

One can recognise a Protein kinase domain in the interval 21 to 418 (YEIFERVGSG…TMEMLNDKYL (398 aa)). Residues 27-35 (VGSGAYADV) and lysine 50 contribute to the ATP site. Tyrosine 32 is subject to Phosphotyrosine. Aspartate 146 (proton acceptor) is an active-site residue. Phosphoserine is present on residues serine 179, serine 208, and serine 247. The tract at residues 187–221 (KLEDKDGETSEPPEVIPDYENSPRQGSDGQEREAM) is disordered. Threonine 290 carries the phosphothreonine modification. Residues 434–479 (PTMSGPDEDSPRKWNDYREMDSDSDFDGFGPMNVKPTSSGFTIEFP) are disordered. Over residues 442–454 (DSPRKWNDYREMD) the composition is skewed to basic and acidic residues. Residues 468 to 479 (KPTSSGFTIEFP) are compositionally biased toward polar residues.

The protein belongs to the protein kinase superfamily. CMGC Ser/Thr protein kinase family. CDC2/CDKX subfamily. Highly expressed in suspension cell culture. Expressed at low levels in all plant organs.

It catalyses the reaction L-seryl-[protein] + ATP = O-phospho-L-seryl-[protein] + ADP + H(+). The catalysed reaction is L-threonyl-[protein] + ATP = O-phospho-L-threonyl-[protein] + ADP + H(+). The enzyme catalyses [DNA-directed RNA polymerase] + ATP = phospho-[DNA-directed RNA polymerase] + ADP + H(+). Functionally, CDK-activating kinase that modulates CDKD-2 and CDKD-3 activities by phosphorylation of the T-loop. Activates CDKD-2 C-terminal domain (CTD) kinase activity. Activates CDKA-1 probably by phosphorylation. Possesses a CDK kinase activity independently of association with cyclin CYCH1-1. Phosphorylates the CTD of the large subunit of RNA polymerase II. This Arabidopsis thaliana (Mouse-ear cress) protein is Cyclin-dependent kinase F-1 (CDKF-1).